The chain runs to 170 residues: Adenine phosphoribosyltransferase (170 aa).

This sequence belongs to the purine/pyrimidine phosphoribosyltransferase family. Homodimer.

The protein localises to the cytoplasm. It catalyses the reaction AMP + diphosphate = 5-phospho-alpha-D-ribose 1-diphosphate + adenine. It participates in purine metabolism; AMP biosynthesis via salvage pathway; AMP from adenine: step 1/1. Its function is as follows. Catalyzes a salvage reaction resulting in the formation of AMP, that is energically less costly than de novo synthesis. This Brevibacillus brevis (strain 47 / JCM 6285 / NBRC 100599) protein is Adenine phosphoribosyltransferase.